The primary structure comprises 301 residues: Aldose reductase (301 aa).

NADP(+) is bound at residue 11–20 (GKEIPTVGLG). Tyr51 serves as the catalytic Proton donor. His111 contacts substrate. 209-266 (SSLGSAPGSSAKVRDDKTIKAIAKKYGCAPSQIILSYITAQGICVIPKSRSKEHLREN) is an NADP(+) binding site.

The protein belongs to the aldo/keto reductase family.

It is found in the cytoplasm. The catalysed reaction is an alditol + NAD(+) = an aldose + NADH + H(+). The enzyme catalyses an alditol + NADP(+) = an aldose + NADPH + H(+). Functionally, catalyzes the NADPH-dependent reduction of a wide variety of carbonyl-containing compounds to their corresponding alcohols with a broad range of catalytic efficiencies. The polypeptide is Aldose reductase (Encephalitozoon cuniculi (strain GB-M1) (Microsporidian parasite)).